Consider the following 106-residue polypeptide: Small ribosomal subunit protein uS10 (106 aa).

The protein belongs to the universal ribosomal protein uS10 family. Part of the 30S ribosomal subunit.

Its function is as follows. Involved in the binding of tRNA to the ribosomes. This chain is Small ribosomal subunit protein uS10, found in Caldicellulosiruptor saccharolyticus (strain ATCC 43494 / DSM 8903 / Tp8T 6331).